A 158-amino-acid chain; its full sequence is uncharacterized protein (158 aa).

Residues 3–130 form the Nudix hydrolase domain; that stretch reads YLQRVTNCVL…DGHILDFMMK (128 aa). A Nudix box motif is present at residues 34 to 55; it reads GKMESGESVRDSVIREYREETG. Mg(2+) contacts are provided by glutamate 49 and glutamate 53.

The protein belongs to the Nudix hydrolase family. The cofactor is Mg(2+).

This is an uncharacterized protein from Bacillus subtilis (strain 168).